The sequence spans 315 residues: Ornithine carbamoyltransferase (315 aa).

Residues Ser53–Thr56, Gln80, Arg104, and His131–Gln134 each bind carbamoyl phosphate. L-ornithine contacts are provided by residues Asn163, Asp227, and Ser231–Met232. Carbamoyl phosphate contacts are provided by residues Cys267–Leu268 and Arg295.

Belongs to the aspartate/ornithine carbamoyltransferase superfamily. OTCase family.

It localises to the cytoplasm. It catalyses the reaction carbamoyl phosphate + L-ornithine = L-citrulline + phosphate + H(+). It functions in the pathway amino-acid biosynthesis; L-arginine biosynthesis; L-arginine from L-ornithine and carbamoyl phosphate: step 1/3. Functionally, reversibly catalyzes the transfer of the carbamoyl group from carbamoyl phosphate (CP) to the N(epsilon) atom of ornithine (ORN) to produce L-citrulline. The polypeptide is Ornithine carbamoyltransferase (Rhodococcus jostii (strain RHA1)).